The chain runs to 229 residues: Ribosomal RNA small subunit methyltransferase G (229 aa).

Residues glycine 71, 122–123 (AE), and arginine 139 each bind S-adenosyl-L-methionine.

This sequence belongs to the methyltransferase superfamily. RNA methyltransferase RsmG family.

The protein localises to the cytoplasm. In terms of biological role, specifically methylates the N7 position of a guanine in 16S rRNA. This Thermotoga neapolitana (strain ATCC 49049 / DSM 4359 / NBRC 107923 / NS-E) protein is Ribosomal RNA small subunit methyltransferase G.